We begin with the raw amino-acid sequence, 72 residues long: Translation initiation factor IF-1 (72 aa).

An S1-like domain is found at 1–72; sequence MAKEDCIEMQ…SKARIIFRAR (72 aa).

The protein belongs to the IF-1 family. Component of the 30S ribosomal translation pre-initiation complex which assembles on the 30S ribosome in the order IF-2 and IF-3, IF-1 and N-formylmethionyl-tRNA(fMet); mRNA recruitment can occur at any time during PIC assembly.

Its subcellular location is the cytoplasm. Its function is as follows. One of the essential components for the initiation of protein synthesis. Stabilizes the binding of IF-2 and IF-3 on the 30S subunit to which N-formylmethionyl-tRNA(fMet) subsequently binds. Helps modulate mRNA selection, yielding the 30S pre-initiation complex (PIC). Upon addition of the 50S ribosomal subunit IF-1, IF-2 and IF-3 are released leaving the mature 70S translation initiation complex. The protein is Translation initiation factor IF-1 of Actinobacillus pleuropneumoniae serotype 5b (strain L20).